The primary structure comprises 100 residues: Protein Tat (100 aa).

The tract at residues 1–24 (MDPIDPDLEPWKHPGSQPRTVCNN) is interaction with human CREBBP. The interval 1-48 (MDPIDPDLEPWKHPGSQPRTVCNNCYCKACCYHCIYCFTKKGLGISYG) is transactivation. Residues Cys-22, Cys-25, and Cys-27 each coordinate Zn(2+). The interval 22–37 (CNNCYCKACCYHCIYC) is cysteine-rich. The residue at position 28 (Lys-28) is an N6-acetyllysine; by host PCAF. Zn(2+)-binding residues include Cys-30, His-33, Cys-34, and Cys-37. A core region spans residues 38–48 (FTKKGLGISYG). The span at 48–58 (GRKKRTTRRRT) shows a compositional bias: basic residues. A disordered region spans residues 48–100 (GRKKRTTRRRTAPAGSKNNQDSIPKQPLSQSRGNKEGSEKSTKEVASKTEADQ). The Nuclear localization signal, RNA-binding (TAR), and protein transduction motif lies at 49-57 (RKKRTTRRR). The segment at 49–87 (RKKRTTRRRTAPAGSKNNQDSIPKQPLSQSRGNKEGSEK) is interaction with the host capping enzyme RNGTT. Residues Lys-50 and Lys-51 each carry the N6-acetyllysine; by host EP300 and GCN5L2 modification. Arg-52 carries the asymmetric dimethylarginine; by host PRMT6 modification. Polar residues predominate over residues 63-79 (SKNNQDSIPKQPLSQSR). Lys-72 participates in a covalent cross-link: Glycyl lysine isopeptide (Lys-Gly) (interchain with G-Cter in ubiquitin). The segment covering 80-100 (GNKEGSEKSTKEVASKTEADQ) has biased composition (basic and acidic residues).

The protein belongs to the lentiviruses Tat family. As to quaternary structure, interacts with host CCNT1. Associates with the P-TEFb complex composed at least of Tat, P-TEFb (CDK9 and CCNT1), TAR RNA, RNA Pol II. Recruits the HATs CREBBP, TAF1/TFIID, EP300, PCAF and GCN5L2. Interacts with host KAT5/Tip60; this interaction targets the latter to degradation. Interacts with the host deacetylase SIRT1. Interacts with host capping enzyme RNGTT; this interaction stimulates RNGTT. Binds to host KDR, and to the host integrins ITGAV/ITGB3 and ITGA5/ITGB1. Interacts with host KPNB1/importin beta-1 without previous binding to KPNA1/importin alpha-1. Interacts with EIF2AK2. Interacts with host nucleosome assembly protein NAP1L1; this interaction may be required for the transport of Tat within the nucleus, since the two proteins interact at the nuclear rim. Interacts with host C1QBP/SF2P32; this interaction involves lysine-acetylated Tat. Interacts with the host chemokine receptors CCR2, CCR3 and CXCR4. Interacts with host DPP4/CD26; this interaction may trigger an anti-proliferative effect. Interacts with host LDLR. Interacts with the host extracellular matrix metalloproteinase MMP1. Interacts with host PRMT6; this interaction mediates Tat's methylation. Interacts with, and is ubiquitinated by MDM2/Hdm2. Interacts with host PSMC3 and HTATIP2. Interacts with STAB1; this interaction may overcome SATB1-mediated repression of IL2 and IL2RA (interleukin) in T cells by binding to the same domain than HDAC1. Interacts (when acetylated) with human CDK13, thereby increasing HIV-1 mRNA splicing and promoting the production of the doubly spliced HIV-1 protein Nef. Interacts with host TBP; this interaction modulates the activity of transcriptional pre-initiation complex. Interacts with host RELA. In terms of processing, asymmetrical arginine methylation by host PRMT6 seems to diminish the transactivation capacity of Tat and affects the interaction with host CCNT1. Acetylation by EP300, CREBBP, GCN5L2/GCN5 and PCAF regulates the transactivation activity of Tat. EP300-mediated acetylation of Lys-50 promotes dissociation of Tat from the TAR RNA through the competitive binding to PCAF's bromodomain. In addition, the non-acetylated Tat's N-terminus can also interact with PCAF. PCAF-mediated acetylation of Lys-28 enhances Tat's binding to CCNT1. Lys-50 is deacetylated by SIRT1. Post-translationally, polyubiquitination by host MDM2 does not target Tat to degradation, but activates its transactivation function and fosters interaction with CCNT1 and TAR RNA. In terms of processing, phosphorylated by EIF2AK2 on serine and threonine residues adjacent to the basic region important for TAR RNA binding and function. Phosphorylation of Tat by EIF2AK2 is dependent on the prior activation of EIF2AK2 by dsRNA.

Its subcellular location is the host nucleus. The protein resides in the host nucleolus. It localises to the host cytoplasm. It is found in the secreted. Functionally, transcriptional activator that increases RNA Pol II processivity, thereby increasing the level of full-length viral transcripts. Recognizes a hairpin structure at the 5'-LTR of the nascent viral mRNAs referred to as the transactivation responsive RNA element (TAR) and recruits the cyclin T1-CDK9 complex (P-TEFb complex) that will in turn hyperphosphorylate the RNA polymerase II to allow efficient elongation. The CDK9 component of P-TEFb and other Tat-activated kinases hyperphosphorylate the C-terminus of RNA Pol II that becomes stabilized and much more processive. Other factors such as HTATSF1/Tat-SF1, SUPT5H/SPT5, and HTATIP2 are also important for Tat's function. Besides its effect on RNA Pol II processivity, Tat induces chromatin remodeling of proviral genes by recruiting the histone acetyltransferases (HATs) CREBBP, EP300 and PCAF to the chromatin. This also contributes to the increase in proviral transcription rate, especially when the provirus integrates in transcriptionally silent region of the host genome. To ensure maximal activation of the LTR, Tat mediates nuclear translocation of NF-kappa-B by interacting with host RELA. Through its interaction with host TBP, Tat may also modulate transcription initiation. Tat can reactivate a latently infected cell by penetrating in it and transactivating its LTR promoter. In the cytoplasm, Tat is thought to act as a translational activator of HIV-1 mRNAs. Its function is as follows. Extracellular circulating Tat can be endocytosed by surrounding uninfected cells via the binding to several surface receptors such as CD26, CXCR4, heparan sulfate proteoglycans (HSPG) or LDLR. Neurons are rarely infected, but they internalize Tat via their LDLR. Through its interaction with nuclear HATs, Tat is potentially able to control the acetylation-dependent cellular gene expression. Modulates the expression of many cellular genes involved in cell survival, proliferation or in coding for cytokines or cytokine receptors. Tat plays a role in T-cell and neurons apoptosis. Tat induced neurotoxicity and apoptosis probably contribute to neuroAIDS. Circulating Tat also acts as a chemokine-like and/or growth factor-like molecule that binds to specific receptors on the surface of the cells, affecting many cellular pathways. In the vascular system, Tat binds to ITGAV/ITGB3 and ITGA5/ITGB1 integrins dimers at the surface of endothelial cells and competes with bFGF for heparin-binding sites, leading to an excess of soluble bFGF. The polypeptide is Protein Tat (Pan (chimpanzees)).